A 218-amino-acid chain; its full sequence is Small ribosomal subunit protein uS5 (218 aa).

Polar residues predominate over residues 1–10; that stretch reads MTQATNQTPG. The segment at 1 to 63 is disordered; it reads MTQATNQTPG…GRDERDSEWQ (63 aa). Residues 11 to 25 show a composition bias toward low complexity; it reads QDVPGAADVPAAAEG. A compositionally biased stretch (basic and acidic residues) spans 31-63; it reads GERRGGGGGRGGDRRGRGDRRGRGRDERDSEWQ. The region spanning 62 to 125 is the S5 DRBM domain; it reads WQERVIQIRR…ADGKKHLVKV (64 aa).

This sequence belongs to the universal ribosomal protein uS5 family. In terms of assembly, part of the 30S ribosomal subunit. Contacts proteins S4 and S8.

Functionally, with S4 and S12 plays an important role in translational accuracy. Its function is as follows. Located at the back of the 30S subunit body where it stabilizes the conformation of the head with respect to the body. The sequence is that of Small ribosomal subunit protein uS5 from Synechococcus sp. (strain RCC307).